Here is a 542-residue protein sequence, read N- to C-terminus: Adenosylmethionine-8-amino-7-oxononanoate aminotransferase (542 aa).

Pyridoxal 5'-phosphate is bound at residue 170-171 (GS). Y205 serves as a coordination point for substrate. Position 311 (D311) interacts with pyridoxal 5'-phosphate. Residues K340, G375, and R470 each coordinate substrate. K340 is subject to N6-(pyridoxal phosphate)lysine. The interval 509 to 542 (DGGLWTKRPDGPDNPDKANTPDTPDGARTGETVV) is disordered. Basic and acidic residues predominate over residues 515–524 (KRPDGPDNPD).

This sequence belongs to the class-III pyridoxal-phosphate-dependent aminotransferase family. BioA subfamily. As to quaternary structure, homodimer. The cofactor is pyridoxal 5'-phosphate.

The protein localises to the cytoplasm. It carries out the reaction (8S)-8-amino-7-oxononanoate + S-adenosyl-L-methionine = S-adenosyl-4-methylsulfanyl-2-oxobutanoate + (7R,8S)-7,8-diammoniononanoate. It functions in the pathway cofactor biosynthesis; biotin biosynthesis; 7,8-diaminononanoate from 8-amino-7-oxononanoate (SAM route): step 1/1. Catalyzes the transfer of the alpha-amino group from S-adenosyl-L-methionine (SAM) to 7-keto-8-aminopelargonic acid (KAPA) to form 7,8-diaminopelargonic acid (DAPA). It is the only aminotransferase known to utilize SAM as an amino donor. This chain is Adenosylmethionine-8-amino-7-oxononanoate aminotransferase, found in Nitratidesulfovibrio vulgaris (strain ATCC 29579 / DSM 644 / CCUG 34227 / NCIMB 8303 / VKM B-1760 / Hildenborough) (Desulfovibrio vulgaris).